A 783-amino-acid chain; its full sequence is Endonuclease MutS2 (783 aa).

Residue 328–335 (GPNTGGKT) participates in ATP binding. Residues 708–783 (LDLRGKRYEE…GSGCTIATLG (76 aa)) form the Smr domain.

It belongs to the DNA mismatch repair MutS family. MutS2 subfamily. As to quaternary structure, homodimer. Binds to stalled ribosomes, contacting rRNA.

Endonuclease that is involved in the suppression of homologous recombination and thus may have a key role in the control of bacterial genetic diversity. Its function is as follows. Acts as a ribosome collision sensor, splitting the ribosome into its 2 subunits. Detects stalled/collided 70S ribosomes which it binds and splits by an ATP-hydrolysis driven conformational change. Acts upstream of the ribosome quality control system (RQC), a ribosome-associated complex that mediates the extraction of incompletely synthesized nascent chains from stalled ribosomes and their subsequent degradation. Probably generates substrates for RQC. The polypeptide is Endonuclease MutS2 (Streptococcus thermophilus (strain ATCC BAA-491 / LMD-9)).